The sequence spans 78 residues: Conotoxin Bu2 (78 aa).

The N-terminal stretch at 1–19 (MKLTCVLIIAVLFLTAITA) is a signal peptide. The propeptide occupies 20-41 (DDSRDKQVYRAVGLIDKMRRIR). 3 cysteine pairs are disulfide-bonded: cysteine 46-cysteine 59, cysteine 53-cysteine 64, and cysteine 58-cysteine 73.

It belongs to the conotoxin O1 superfamily. In terms of tissue distribution, expressed by the venom duct.

It is found in the secreted. This chain is Conotoxin Bu2, found in Conus bullatus (Bubble cone).